Here is a 61-residue protein sequence, read N- to C-terminus: Delta-actitoxin-Avd2c (61 aa).

Positions 1-20 (MMNRLLVFLMLGAFMLVVSA) are cleaved as a signal peptide. A propeptide spanning residues 21-31 (NDAYGGDESLG) is cleaved from the precursor. Disulfide bonds link Cys-36/Cys-51, Cys-37/Cys-45, and Cys-39/Cys-56.

This sequence belongs to the sea anemone short toxin (type III) family.

The protein resides in the secreted. Its subcellular location is the nematocyst. Its function is as follows. Sodium channel inhibitor. 5 uM completely inhibits voltage-gated sodium channel (Nav) inactivation. This Anemonia viridis (Snakelocks anemone) protein is Delta-actitoxin-Avd2c.